The chain runs to 99 residues: Integration host factor subunit alpha (99 aa).

Residues 49–73 (FGNFDLRDKNQRPGRNPKTGEDIPI) are disordered.

It belongs to the bacterial histone-like protein family. As to quaternary structure, heterodimer of an alpha and a beta chain.

This protein is one of the two subunits of integration host factor, a specific DNA-binding protein that functions in genetic recombination as well as in transcriptional and translational control. This Serratia marcescens protein is Integration host factor subunit alpha (ihfA).